We begin with the raw amino-acid sequence, 252 residues long: Membrane protein insertase YidC (252 aa).

An N-terminal signal peptide occupies residues 1-19; it reads MKKVLWIIIIILMVGALAG. Cysteine 20 carries the N-palmitoyl cysteine lipid modification. Cysteine 20 is lipidated: S-diacylglycerol cysteine. The next 6 membrane-spanning stretches (helical) occupy residues 34–54, 58–78, 131–151, 162–182, 201–221, and 223–243; these read IWNHFFVYPLSWVLISVADLL, FGLSIIVVTIGIRLFLLPLMI, MAGCLPLFIQLPVMMAFYFAI, FLWFDLGSPDPLYILPVVAGI, VIIYIMPVMIVVAGVTLPSAL, and LYWVVGNLFMIIQTYFTVVRF.

The protein belongs to the OXA1/ALB3/YidC family. Type 2 subfamily.

Its subcellular location is the cell membrane. Required for the insertion and/or proper folding and/or complex formation of integral membrane proteins into the membrane. Involved in integration of membrane proteins that insert both dependently and independently of the Sec translocase complex, as well as at least some lipoproteins. This Alkalihalophilus pseudofirmus (strain ATCC BAA-2126 / JCM 17055 / OF4) (Bacillus pseudofirmus) protein is Membrane protein insertase YidC.